The chain runs to 256 residues: Diaminopimelate epimerase (256 aa).

Substrate is bound by residues N11 and N63. C72 serves as the catalytic Proton donor. Residues 73 to 74 (GN), N169, and 187 to 188 (ER) contribute to the substrate site. The active-site Proton acceptor is C197. Residue 198-199 (GT) coordinates substrate.

Belongs to the diaminopimelate epimerase family. Homodimer.

It localises to the cytoplasm. It catalyses the reaction (2S,6S)-2,6-diaminopimelate = meso-2,6-diaminopimelate. It participates in amino-acid biosynthesis; L-lysine biosynthesis via DAP pathway; DL-2,6-diaminopimelate from LL-2,6-diaminopimelate: step 1/1. Functionally, catalyzes the stereoinversion of LL-2,6-diaminopimelate (L,L-DAP) to meso-diaminopimelate (meso-DAP), a precursor of L-lysine and an essential component of the bacterial peptidoglycan. The sequence is that of Diaminopimelate epimerase from Flavobacterium psychrophilum (strain ATCC 49511 / DSM 21280 / CIP 103535 / JIP02/86).